We begin with the raw amino-acid sequence, 233 residues long: Phosphoribosylformylglycinamidine synthase subunit PurQ (233 aa).

Positions 3 to 233 constitute a Glutamine amidotransferase type-1 domain; that stretch reads SAILVFPGIN…GLVAHLERAA (231 aa). The active-site Nucleophile is Cys-87. Catalysis depends on residues His-204 and Glu-206.

Part of the FGAM synthase complex composed of 1 PurL, 1 PurQ and 2 PurS subunits.

Its subcellular location is the cytoplasm. It catalyses the reaction N(2)-formyl-N(1)-(5-phospho-beta-D-ribosyl)glycinamide + L-glutamine + ATP + H2O = 2-formamido-N(1)-(5-O-phospho-beta-D-ribosyl)acetamidine + L-glutamate + ADP + phosphate + H(+). The catalysed reaction is L-glutamine + H2O = L-glutamate + NH4(+). The protein operates within purine metabolism; IMP biosynthesis via de novo pathway; 5-amino-1-(5-phospho-D-ribosyl)imidazole from N(2)-formyl-N(1)-(5-phospho-D-ribosyl)glycinamide: step 1/2. Its function is as follows. Part of the phosphoribosylformylglycinamidine synthase complex involved in the purines biosynthetic pathway. Catalyzes the ATP-dependent conversion of formylglycinamide ribonucleotide (FGAR) and glutamine to yield formylglycinamidine ribonucleotide (FGAM) and glutamate. The FGAM synthase complex is composed of three subunits. PurQ produces an ammonia molecule by converting glutamine to glutamate. PurL transfers the ammonia molecule to FGAR to form FGAM in an ATP-dependent manner. PurS interacts with PurQ and PurL and is thought to assist in the transfer of the ammonia molecule from PurQ to PurL. This chain is Phosphoribosylformylglycinamidine synthase subunit PurQ, found in Nitrobacter hamburgensis (strain DSM 10229 / NCIMB 13809 / X14).